A 242-amino-acid chain; its full sequence is Large ribosomal subunit protein uL2 (242 aa).

Residues 201-242 (VDHPFGGGRHQHTGKPTTVSRKKVPPGRKVGHISARRTGVRK) form a disordered region. The span at 220-242 (SRKKVPPGRKVGHISARRTGVRK) shows a compositional bias: basic residues.

This sequence belongs to the universal ribosomal protein uL2 family. In terms of assembly, part of the 50S ribosomal subunit. Forms a bridge to the 30S subunit in the 70S ribosome.

One of the primary rRNA binding proteins. Required for association of the 30S and 50S subunits to form the 70S ribosome, for tRNA binding and peptide bond formation. It has been suggested to have peptidyltransferase activity; this is somewhat controversial. Makes several contacts with the 16S rRNA in the 70S ribosome. In Methanocaldococcus jannaschii (strain ATCC 43067 / DSM 2661 / JAL-1 / JCM 10045 / NBRC 100440) (Methanococcus jannaschii), this protein is Large ribosomal subunit protein uL2.